Consider the following 65-residue polypeptide: Temporin-SN1 (65 aa).

The first 22 residues, 1–22 (MFTTKKSLLLLFFLGTINLSLC), serve as a signal peptide directing secretion. Residues 23 to 44 (QEERNAEEERRDGDDEGGVEVQ) constitute a propeptide, removed in mature form. A Lysine amide modification is found at Lys65.

It belongs to the frog skin active peptide (FSAP) family. Temporin subfamily. As to expression, expressed by the skin glands.

It localises to the secreted. Functionally, antimicrobial peptide. Active against a variety of Gram-positive bacterial strains. Not active against Gram-negative bacteria and against fungi. Shows hemolytic activity against human erythrocytes. This chain is Temporin-SN1, found in Sylvirana spinulosa (Fine-spined frog).